The chain runs to 535 residues: Nuclear/nucleolar GTPase 2 (535 aa).

Residues 1–42 are disordered; it reads MAKKKERAVNVSGKPRHSLDVNRANDKKGAGGGAGGGGGGRS. A compositionally biased stretch (basic and acidic residues) spans 17 to 29; it reads HSLDVNRANDKKG. A compositionally biased stretch (gly residues) spans 30 to 41; sequence AGGGAGGGGGGR. Residues 213-374 enclose the CP-type G domain; it reads WGELYKVIDS…LIDCPGVVYQ (162 aa). A G4 region spans residues 261-264; sequence NKCD. The G5 stretch occupies residues 290–292; sequence SIN. A G1 region spans residues 323–330; it reads GYPNVGKS. Residues 349–353 are G2; sequence GETKV. The segment at 367–370 is G3; that stretch reads DCPG. The disordered stretch occupies residues 464–494; it reads FFVPPPQQGEDSPSETAEPVEKSDEEGVSSD.

The protein belongs to the TRAFAC class YlqF/YawG GTPase family. RsgA subfamily. As to quaternary structure, interacts (via N-terminus) with the 60S ribosomal proteins RPL10A. This interaction is enhanced by the addition of GTP. Expressed in roots, shoot apical meristem, leaves, leaf sheaths and flowers.

It localises to the nucleus. The protein resides in the nucleolus. With respect to regulation, the GTPase activity is stimulated in the presence of ribosomes, particularly of the 60S subunit. GTPase involved in pre-60S ribosomal subunit maturation. This Oryza sativa subsp. japonica (Rice) protein is Nuclear/nucleolar GTPase 2.